Here is a 269-residue protein sequence, read N- to C-terminus: Phosphate import ATP-binding protein PstB 2 (269 aa).

The ABC transporter domain occupies 23-264 (LHTEDLHVFY…PKIQATEDYV (242 aa)). 55 to 62 (GPSGCGKS) lines the ATP pocket.

Belongs to the ABC transporter superfamily. Phosphate importer (TC 3.A.1.7) family. As to quaternary structure, the complex is composed of two ATP-binding proteins (PstB), two transmembrane proteins (PstC and PstA) and a solute-binding protein (PstS).

Its subcellular location is the cell membrane. The enzyme catalyses phosphate(out) + ATP + H2O = ADP + 2 phosphate(in) + H(+). Its function is as follows. Part of the ABC transporter complex PstSACB involved in phosphate import. Responsible for energy coupling to the transport system. The polypeptide is Phosphate import ATP-binding protein PstB 2 (Enterococcus faecalis (strain ATCC 700802 / V583)).